We begin with the raw amino-acid sequence, 132 residues long: Large ribosomal subunit protein uL22c (132 aa).

Belongs to the universal ribosomal protein uL22 family. Part of the 50S ribosomal subunit.

It is found in the plastid. Its subcellular location is the chloroplast. This protein binds specifically to 23S rRNA. Its function is as follows. The globular domain of the protein is located near the polypeptide exit tunnel on the outside of the subunit, while an extended beta-hairpin is found that lines the wall of the exit tunnel in the center of the 70S ribosome. The sequence is that of Large ribosomal subunit protein uL22c (rpl22) from Staurastrum punctulatum (Green alga).